A 36-amino-acid chain; its full sequence is U-metritoxin-Msn1a (36 aa).

The region spanning 4 to 36 (CKDKLPACGEYRGSFCKLEKVKSNCEKTCGVKC) is the ShKT domain. 3 disulfide bridges follow: cysteine 4–cysteine 36, cysteine 11–cysteine 28, and cysteine 19–cysteine 32.

This sequence belongs to the sea anemone type 1 potassium channel toxin family. Type 1b subfamily.

It localises to the secreted. It is found in the nematocyst. Has hemolytic activity. Inhibits voltage-gated potassium channels (Kv1/KCNA). In Metridium senile (Brown sea anemone), this protein is U-metritoxin-Msn1a.